The chain runs to 168 residues: MPRSQINGNFIDKTFSIVANILLRIIPTTSGEKEAFTYYRDGMSAQSEGNYAEALQNYYEAMRLEIDPYDRSYILYNIGLIHTSNGEHTKALEYYFRALERNPFLPQAFNNMAVICHYRGEQAIRQGDSEIAEAWFDQAAEYWKQAIALTPGNYIEAQNWLKITRRFE.

3 TPR repeats span residues 35–68 (AFTY…EIDP), 72–105 (SYIL…NPFL), and 120–153 (GEQA…TPGN).

It belongs to the Ycf3 family.

It localises to the plastid. The protein localises to the chloroplast thylakoid membrane. Its function is as follows. Essential for the assembly of the photosystem I (PSI) complex. May act as a chaperone-like factor to guide the assembly of the PSI subunits. The polypeptide is Photosystem I assembly protein Ycf3 (Gossypium barbadense (Sea Island cotton)).